Here is a 310-residue protein sequence, read N- to C-terminus: Porphobilinogen deaminase (310 aa).

S-(dipyrrolylmethanemethyl)cysteine is present on C243.

Belongs to the HMBS family. In terms of assembly, monomer. Dipyrromethane is required as a cofactor.

The enzyme catalyses 4 porphobilinogen + H2O = hydroxymethylbilane + 4 NH4(+). The protein operates within porphyrin-containing compound metabolism; protoporphyrin-IX biosynthesis; coproporphyrinogen-III from 5-aminolevulinate: step 2/4. In terms of biological role, tetrapolymerization of the monopyrrole PBG into the hydroxymethylbilane pre-uroporphyrinogen in several discrete steps. The chain is Porphobilinogen deaminase from Mannheimia succiniciproducens (strain KCTC 0769BP / MBEL55E).